We begin with the raw amino-acid sequence, 153 residues long: 6,7-dimethyl-8-ribityllumazine synthase (153 aa).

5-amino-6-(D-ribitylamino)uracil-binding positions include phenylalanine 22, 56 to 58, and 80 to 82; these read AFE and TVI. (2S)-2-hydroxy-3-oxobutyl phosphate is bound at residue 85 to 86; the sequence is ST. Catalysis depends on histidine 88, which acts as the Proton donor. Phenylalanine 113 contacts 5-amino-6-(D-ribitylamino)uracil. Residue arginine 127 participates in (2S)-2-hydroxy-3-oxobutyl phosphate binding.

This sequence belongs to the DMRL synthase family. In terms of assembly, forms an icosahedral capsid composed of 60 subunits, arranged as a dodecamer of pentamers.

It catalyses the reaction (2S)-2-hydroxy-3-oxobutyl phosphate + 5-amino-6-(D-ribitylamino)uracil = 6,7-dimethyl-8-(1-D-ribityl)lumazine + phosphate + 2 H2O + H(+). Its pathway is cofactor biosynthesis; riboflavin biosynthesis; riboflavin from 2-hydroxy-3-oxobutyl phosphate and 5-amino-6-(D-ribitylamino)uracil: step 1/2. In terms of biological role, catalyzes the formation of 6,7-dimethyl-8-ribityllumazine by condensation of 5-amino-6-(D-ribitylamino)uracil with 3,4-dihydroxy-2-butanone 4-phosphate. This is the penultimate step in the biosynthesis of riboflavin. The protein is 6,7-dimethyl-8-ribityllumazine synthase of Haemophilus ducreyi (strain 35000HP / ATCC 700724).